The following is a 316-amino-acid chain: tRNA pseudouridine synthase B (316 aa).

Catalysis depends on Asp47, which acts as the Nucleophile.

The protein belongs to the pseudouridine synthase TruB family. Type 1 subfamily.

It catalyses the reaction uridine(55) in tRNA = pseudouridine(55) in tRNA. Its function is as follows. Responsible for synthesis of pseudouridine from uracil-55 in the psi GC loop of transfer RNAs. This is tRNA pseudouridine synthase B from Aliivibrio fischeri (strain MJ11) (Vibrio fischeri).